We begin with the raw amino-acid sequence, 324 residues long: Phospho-N-acetylmuramoyl-pentapeptide-transferase (324 aa).

The next 10 membrane-spanning stretches (helical) occupy residues 9–29 (TFAV…PFLV), 53–73 (TMGA…FSFI), 77–97 (VSAA…LGFL), 117–137 (FLGQ…SDFA), 149–169 (IDLG…FSNA), 176–196 (LDGL…VIAF), 201–221 (MDVA…LLFN), 227–247 (IFMG…VSIL), 253–273 (LLLL…LQVF), and 304–324 (VLTF…VVIF).

The protein belongs to the glycosyltransferase 4 family. MraY subfamily. Mg(2+) is required as a cofactor.

The protein resides in the cell membrane. The catalysed reaction is UDP-N-acetyl-alpha-D-muramoyl-L-alanyl-gamma-D-glutamyl-meso-2,6-diaminopimeloyl-D-alanyl-D-alanine + di-trans,octa-cis-undecaprenyl phosphate = di-trans,octa-cis-undecaprenyl diphospho-N-acetyl-alpha-D-muramoyl-L-alanyl-D-glutamyl-meso-2,6-diaminopimeloyl-D-alanyl-D-alanine + UMP. It functions in the pathway cell wall biogenesis; peptidoglycan biosynthesis. In terms of biological role, catalyzes the initial step of the lipid cycle reactions in the biosynthesis of the cell wall peptidoglycan: transfers peptidoglycan precursor phospho-MurNAc-pentapeptide from UDP-MurNAc-pentapeptide onto the lipid carrier undecaprenyl phosphate, yielding undecaprenyl-pyrophosphoryl-MurNAc-pentapeptide, known as lipid I. The sequence is that of Phospho-N-acetylmuramoyl-pentapeptide-transferase from Listeria innocua serovar 6a (strain ATCC BAA-680 / CLIP 11262).